We begin with the raw amino-acid sequence, 147 residues long: 3-dehydroquinate dehydratase (147 aa).

Tyr23 serves as the catalytic Proton acceptor. The substrate site is built by Asn74, His80, and Asp87. The active-site Proton donor is His100. Substrate is bound by residues 101 to 102 (LS) and Arg111.

The protein belongs to the type-II 3-dehydroquinase family. Homododecamer.

The enzyme catalyses 3-dehydroquinate = 3-dehydroshikimate + H2O. It participates in metabolic intermediate biosynthesis; chorismate biosynthesis; chorismate from D-erythrose 4-phosphate and phosphoenolpyruvate: step 3/7. Functionally, catalyzes a trans-dehydration via an enolate intermediate. The sequence is that of 3-dehydroquinate dehydratase from Clostridium botulinum (strain ATCC 19397 / Type A).